The sequence spans 330 residues: Beta-ketoacyl-[acyl-carrier-protein] synthase III (330 aa).

Catalysis depends on residues Cys-116 and His-257. Positions 258 to 262 (QANQR) are ACP-binding. Asn-287 is an active-site residue.

This sequence belongs to the thiolase-like superfamily. FabH family. In terms of assembly, homodimer.

It is found in the cytoplasm. It carries out the reaction malonyl-[ACP] + acetyl-CoA + H(+) = 3-oxobutanoyl-[ACP] + CO2 + CoA. Its pathway is lipid metabolism; fatty acid biosynthesis. Functionally, catalyzes the condensation reaction of fatty acid synthesis by the addition to an acyl acceptor of two carbons from malonyl-ACP. Catalyzes the first condensation reaction which initiates fatty acid synthesis and may therefore play a role in governing the total rate of fatty acid production. Possesses both acetoacetyl-ACP synthase and acetyl transacylase activities. Its substrate specificity determines the biosynthesis of branched-chain and/or straight-chain of fatty acids. This Synechocystis sp. (strain ATCC 27184 / PCC 6803 / Kazusa) protein is Beta-ketoacyl-[acyl-carrier-protein] synthase III.